The chain runs to 258 residues: Regulatory protein RecX (258 aa).

Belongs to the RecX family.

The protein resides in the cytoplasm. In terms of biological role, modulates RecA activity. The polypeptide is Regulatory protein RecX (Streptococcus equi subsp. zooepidemicus (strain MGCS10565)).